Here is a 132-residue protein sequence, read N- to C-terminus: Replication enhancer protein (132 aa).

The protein belongs to the geminiviridae replication enhancer protein family. As to quaternary structure, homooligomer. Interacts with the replication-associated protein (REP). Interacts with host proliferating cell nuclear antigen (PCNA). Interacts with host retinoblastoma-related protein 1 (RBR1), and may thereby deregulate the host cell cycle. Oligomerization and interaction with PCNA are necessary for optimal replication enhancement.

Its function is as follows. Increases viral DNA accumulation. Enhances infectivity and symptom expression. The protein is Replication enhancer protein of Solanum lycopersicum (Tomato).